The chain runs to 582 residues: External alternative NAD(P)H-ubiquinone oxidoreductase B2, mitochondrial (582 aa).

The N-terminal 38 residues, 1-38 (MRNFSVFERFSKAFKDHPSLTRILVVSTISGGGLIAYS), are a transit peptide targeting the mitochondrion. FAD is bound at residue 60-90 (KVVLLGTGWAGTSFLKNLNNSQYEVQIISPR). Residue 223–259 (LHFVVVGGGPTGVEFAAELHDFVTEDLVSLYPRAKGS) coordinates NAD(+). One can recognise an EF-hand domain in the interval 379 to 414 (KVMEDVSAIFSKADKDKSGTLTLKEFQEAMDDICVR). Residues Asp392, Asp394, Ser396, Thr398, and Glu403 each contribute to the Ca(2+) site. The Microbody targeting signal signature appears at 573–582 (FIFGRDSSSI).

The protein belongs to the NADH dehydrogenase family. The cofactor is FAD. Mostly expressed in seedlings and roots and, to a lower extent, in cotyledons, leaves, stems, buds and flowers.

The protein localises to the mitochondrion inner membrane. The protein resides in the peroxisome. It carries out the reaction a quinone + NADH + H(+) = a quinol + NAD(+). The enzyme catalyses a ubiquinone + NADH + H(+) = a ubiquinol + NAD(+). NADPH oxidase activity is stimulated by calcium ions. Functionally, alternative NADH-ubiquinone oxidoreductase which catalyzes the oxidation of mitochondrial NADH does not translocate protons across the inner mitochondrial membrane. Calcium-dependent NAD(P)H dehydrogenase; more efficient on NADH. Binds calcium ions. In Arabidopsis thaliana (Mouse-ear cress), this protein is External alternative NAD(P)H-ubiquinone oxidoreductase B2, mitochondrial (NDB2).